Consider the following 109-residue polypeptide: Phosphoribosyl-AMP cyclohydrolase (109 aa).

Aspartate 80 is a Mg(2+) binding site. Cysteine 81 contacts Zn(2+). Mg(2+) contacts are provided by aspartate 82 and aspartate 84. Zn(2+) is bound by residues cysteine 97 and cysteine 104.

The protein belongs to the PRA-CH family. Homodimer. It depends on Mg(2+) as a cofactor. Zn(2+) is required as a cofactor.

The protein resides in the cytoplasm. It carries out the reaction 1-(5-phospho-beta-D-ribosyl)-5'-AMP + H2O = 1-(5-phospho-beta-D-ribosyl)-5-[(5-phospho-beta-D-ribosylamino)methylideneamino]imidazole-4-carboxamide. It functions in the pathway amino-acid biosynthesis; L-histidine biosynthesis; L-histidine from 5-phospho-alpha-D-ribose 1-diphosphate: step 3/9. Its function is as follows. Catalyzes the hydrolysis of the adenine ring of phosphoribosyl-AMP. This is Phosphoribosyl-AMP cyclohydrolase from Clostridium botulinum (strain Alaska E43 / Type E3).